The primary structure comprises 228 residues: Lipoprotein-releasing system ATP-binding protein LolD (228 aa).

One can recognise an ABC transporter domain in the interval 6-228 (LRLSGIEKTY…LSDGRLSAES (223 aa)). Residue 43–50 (APSGAGKS) participates in ATP binding.

It belongs to the ABC transporter superfamily. Lipoprotein translocase (TC 3.A.1.125) family. As to quaternary structure, the complex is composed of two ATP-binding proteins (LolD) and two transmembrane proteins (LolC and LolE).

Its subcellular location is the cell inner membrane. Its function is as follows. Part of the ABC transporter complex LolCDE involved in the translocation of mature outer membrane-directed lipoproteins, from the inner membrane to the periplasmic chaperone, LolA. Responsible for the formation of the LolA-lipoprotein complex in an ATP-dependent manner. In Ruegeria pomeroyi (strain ATCC 700808 / DSM 15171 / DSS-3) (Silicibacter pomeroyi), this protein is Lipoprotein-releasing system ATP-binding protein LolD.